The following is a 381-amino-acid chain: tRNA-specific 2-thiouridylase MnmA (381 aa).

ATP contacts are provided by residues 14 to 21 and Met-40; that span reads AMSGGVDS. The active-site Nucleophile is the Cys-108. Cysteines 108 and 205 form a disulfide. Gly-132 contributes to the ATP binding site. Residues 155–157 are interaction with tRNA; sequence KDQ. Catalysis depends on Cys-205, which acts as the Cysteine persulfide intermediate. An interaction with tRNA region spans residues 309-310; that stretch reads RY.

Belongs to the MnmA/TRMU family.

It is found in the cytoplasm. It carries out the reaction S-sulfanyl-L-cysteinyl-[protein] + uridine(34) in tRNA + AH2 + ATP = 2-thiouridine(34) in tRNA + L-cysteinyl-[protein] + A + AMP + diphosphate + H(+). In terms of biological role, catalyzes the 2-thiolation of uridine at the wobble position (U34) of tRNA, leading to the formation of s(2)U34. This chain is tRNA-specific 2-thiouridylase MnmA, found in Deinococcus geothermalis (strain DSM 11300 / CIP 105573 / AG-3a).